The following is a 299-amino-acid chain: Oxygen-dependent coproporphyrinogen-III oxidase (299 aa).

S92 serves as a coordination point for substrate. 2 residues coordinate a divalent metal cation: H96 and H106. H106 acts as the Proton donor in catalysis. 108 to 110 contributes to the substrate binding site; that stretch reads NVR. A divalent metal cation contacts are provided by H145 and H175. The important for dimerization stretch occupies residues 240 to 275; that stretch reads YVEFNLVWDRGTLFGLQTGGRTESILMSMPPLVRWE. 258 to 260 is a substrate binding site; the sequence is GGR.

It belongs to the aerobic coproporphyrinogen-III oxidase family. Homodimer. It depends on a divalent metal cation as a cofactor.

The protein resides in the cytoplasm. It catalyses the reaction coproporphyrinogen III + O2 + 2 H(+) = protoporphyrinogen IX + 2 CO2 + 2 H2O. Its pathway is porphyrin-containing compound metabolism; protoporphyrin-IX biosynthesis; protoporphyrinogen-IX from coproporphyrinogen-III (O2 route): step 1/1. Functionally, involved in the heme biosynthesis. Catalyzes the aerobic oxidative decarboxylation of propionate groups of rings A and B of coproporphyrinogen-III to yield the vinyl groups in protoporphyrinogen-IX. The protein is Oxygen-dependent coproporphyrinogen-III oxidase of Citrobacter koseri (strain ATCC BAA-895 / CDC 4225-83 / SGSC4696).